We begin with the raw amino-acid sequence, 316 residues long: Phosphate acetyltransferase (316 aa).

It belongs to the phosphate acetyltransferase and butyryltransferase family.

The protein localises to the cytoplasm. It carries out the reaction acetyl-CoA + phosphate = acetyl phosphate + CoA. It participates in metabolic intermediate biosynthesis; acetyl-CoA biosynthesis; acetyl-CoA from acetate: step 2/2. The protein is Phosphate acetyltransferase (pta) of Rhizobium meliloti (Ensifer meliloti).